The primary structure comprises 218 residues: Cytochrome P450 3A19 (218 aa).

Cys-153 provides a ligand contact to heme.

This sequence belongs to the cytochrome P450 family. Requires heme as cofactor.

It localises to the endoplasmic reticulum membrane. The protein localises to the microsome membrane. The enzyme catalyses an organic molecule + reduced [NADPH--hemoprotein reductase] + O2 = an alcohol + oxidized [NADPH--hemoprotein reductase] + H2O + H(+). Functionally, cytochromes P450 are a group of heme-thiolate monooxygenases. In liver microsomes, this enzyme is involved in an NADPH-dependent electron transport pathway. It oxidizes a variety of structurally unrelated compounds, including steroids, fatty acids, and xenobiotics. The polypeptide is Cytochrome P450 3A19 (CYP3A19) (Capra hircus aegagrus (Wild goat)).